Reading from the N-terminus, the 460-residue chain is V-type ATP synthase beta chain (460 aa).

This sequence belongs to the ATPase alpha/beta chains family.

Produces ATP from ADP in the presence of a proton gradient across the membrane. The V-type beta chain is a regulatory subunit. The sequence is that of V-type ATP synthase beta chain from Clostridium perfringens (strain ATCC 13124 / DSM 756 / JCM 1290 / NCIMB 6125 / NCTC 8237 / Type A).